Consider the following 747-residue polypeptide: Major facilitator superfamily domain-containing protein 6-B (747 aa).

Helical transmembrane passes span 15–35 (LLFF…CVLQ), 75–95 (KAVL…IGFV), 222–242 (TIFL…APAV), 271–291 (WGIA…TIFI), 306–326 (IAFI…TQFH), 391–411 (VLFV…FLFW), 420–440 (TTLF…AYFI), 453–470 (VLYI…YISY), 485–507 (GLTH…PPAL), 520–540 (LGLG…FFGA), and 546–566 (GLGM…WLLG). Polar residues-rich tracts occupy residues 597–606 (NQSTSQPNSD) and 652–668 (NNDC…QTSA). Disordered stretches follow at residues 597-625 (NQST…NKPA) and 652-747 (NNDC…PTTH). Residues 675–685 (STSSQPNASSS) show a composition bias toward low complexity.

It belongs to the major facilitator superfamily. MFSD6 family.

The protein resides in the membrane. In Danio rerio (Zebrafish), this protein is Major facilitator superfamily domain-containing protein 6-B (mfsd6b).